A 398-amino-acid chain; its full sequence is Argininosuccinate synthase (398 aa).

8–16 lines the ATP pocket; it reads AYSGGLDTS. Position 87 (Y87) interacts with L-citrulline. G117 provides a ligand contact to ATP. Residues T119, N123, and D124 each contribute to the L-aspartate site. N123 serves as a coordination point for L-citrulline. L-citrulline-binding residues include R127, S175, E260, and Y272.

This sequence belongs to the argininosuccinate synthase family. Type 1 subfamily. In terms of assembly, homotetramer.

It localises to the cytoplasm. It carries out the reaction L-citrulline + L-aspartate + ATP = 2-(N(omega)-L-arginino)succinate + AMP + diphosphate + H(+). The protein operates within amino-acid biosynthesis; L-arginine biosynthesis; L-arginine from L-ornithine and carbamoyl phosphate: step 2/3. The protein is Argininosuccinate synthase of Mycobacterium avium (strain 104).